A 379-amino-acid chain; its full sequence is Cytochrome-c peroxidase IdrP1 (379 aa).

The N-terminal stretch at 1–24 (MNNRKPLQLSLLVASLAVAFTASA) is a signal peptide. Cytochrome c domains follow at residues 50-158 (EKIA…DAFK) and 204-355 (TSQK…EALS). Cys-72, Cys-75, His-76, Cys-219, Cys-222, and His-223 together coordinate heme c.

The iodate reductase (Idr) complex is composed of a molybdopterin-dependent iodate reductase (IdrA and IdrB subunits) and two associated peroxidases (IdrP1 and IdrP2). Requires heme c as cofactor.

The protein localises to the periplasm. It catalyses the reaction 2 Fe(II)-[cytochrome c] + H2O2 + 2 H(+) = 2 Fe(III)-[cytochrome c] + 2 H2O. In terms of biological role, involved in iodate respiration. Probably reduces the H(2)O(2) produced by IdrA/IdrB to H(2)O, using a reduced cytochrome c as the electron donor. This chain is Cytochrome-c peroxidase IdrP1, found in Pseudomonas sp. (strain SCT).